The sequence spans 389 residues: S-adenosylmethionine synthase (389 aa).

ATP is bound at residue His-17. Residue Asp-19 participates in Mg(2+) binding. Glu-45 lines the K(+) pocket. L-methionine is bound by residues Glu-58 and Gln-101. Residues 101 to 111 form a flexible loop region; it reads QSPDIAQGVTE. ATP contacts are provided by residues 168–170, 234–235, Asp-243, 249–250, Ala-266, and Lys-270; these read DSK, RF, and RK. Asp-243 contributes to the L-methionine binding site. Residue Lys-274 participates in L-methionine binding.

Belongs to the AdoMet synthase family. As to quaternary structure, homotetramer; dimer of dimers. Mg(2+) serves as cofactor. It depends on K(+) as a cofactor.

The protein localises to the cytoplasm. It carries out the reaction L-methionine + ATP + H2O = S-adenosyl-L-methionine + phosphate + diphosphate. The protein operates within amino-acid biosynthesis; S-adenosyl-L-methionine biosynthesis; S-adenosyl-L-methionine from L-methionine: step 1/1. Functionally, catalyzes the formation of S-adenosylmethionine (AdoMet) from methionine and ATP. The overall synthetic reaction is composed of two sequential steps, AdoMet formation and the subsequent tripolyphosphate hydrolysis which occurs prior to release of AdoMet from the enzyme. The sequence is that of S-adenosylmethionine synthase from Geobacter sp. (strain M21).